Consider the following 329-residue polypeptide: MRIALDAMGGDNAPKAHVEAAIRAVQTFPELEVTLIGNEEQIRPHLTDTTRLTVIHTTEKIEDTDKPTTAVRRKKEASMVLCVKEVKEGNADACISSGNTGALMTAGLLYVGRIKGVERPGLAPTLPTIDGNGFLLLDAGANMDASPEHLLQYAIIGDAYRRNVYQQKNPRIGLLNVGAEAGKGTELTKQAYQLLENSSLHFIGNVEARDLFAGVCDIVVCDGFSGNVVLKSVEGTAKMVFSLLKEQLTSSLPAKLAAGMLKPQFRNLKEKMDYSEYGGAGLFGLKAPVIKAHGSSDANAVFHAIRQAKEMVDNEVTKTITQKLENGGE.

It belongs to the PlsX family. In terms of assembly, homodimer. Probably interacts with PlsY.

The protein localises to the cytoplasm. It catalyses the reaction a fatty acyl-[ACP] + phosphate = an acyl phosphate + holo-[ACP]. Its pathway is lipid metabolism; phospholipid metabolism. In terms of biological role, catalyzes the reversible formation of acyl-phosphate (acyl-PO(4)) from acyl-[acyl-carrier-protein] (acyl-ACP). This enzyme utilizes acyl-ACP as fatty acyl donor, but not acyl-CoA. The sequence is that of Phosphate acyltransferase from Shouchella clausii (strain KSM-K16) (Alkalihalobacillus clausii).